The following is a 359-amino-acid chain: Protein mab-21-like 2 (359 aa).

The protein belongs to the mab-21 family.

Its subcellular location is the nucleus. It localises to the cytoplasm. Functionally, required for several aspects of embryonic development including normal development of the eye. The polypeptide is Protein mab-21-like 2 (MAB21L2) (Homo sapiens (Human)).